A 237-amino-acid chain; its full sequence is tRNA (guanine-N(1)-)-methyltransferase (237 aa).

S-adenosyl-L-methionine contacts are provided by residues Gly115 and 134–139 (LGDFVL).

This sequence belongs to the RNA methyltransferase TrmD family. As to quaternary structure, homodimer.

Its subcellular location is the cytoplasm. It carries out the reaction guanosine(37) in tRNA + S-adenosyl-L-methionine = N(1)-methylguanosine(37) in tRNA + S-adenosyl-L-homocysteine + H(+). Specifically methylates guanosine-37 in various tRNAs. This chain is tRNA (guanine-N(1)-)-methyltransferase, found in Synechococcus sp. (strain RCC307).